A 205-amino-acid polypeptide reads, in one-letter code: uncharacterized protein (205 aa).

This is an uncharacterized protein from Saccharomyces cerevisiae (strain ATCC 204508 / S288c) (Baker's yeast).